We begin with the raw amino-acid sequence, 260 residues long: Hydroxyethylthiazole kinase 1 (260 aa).

Met-39 lines the substrate pocket. Residues Arg-115 and Thr-160 each coordinate ATP. Residue Gly-187 coordinates substrate.

Belongs to the Thz kinase family. Mg(2+) is required as a cofactor.

The catalysed reaction is 5-(2-hydroxyethyl)-4-methylthiazole + ATP = 4-methyl-5-(2-phosphooxyethyl)-thiazole + ADP + H(+). It participates in cofactor biosynthesis; thiamine diphosphate biosynthesis; 4-methyl-5-(2-phosphoethyl)-thiazole from 5-(2-hydroxyethyl)-4-methylthiazole: step 1/1. In terms of biological role, catalyzes the phosphorylation of the hydroxyl group of 4-methyl-5-beta-hydroxyethylthiazole (THZ). This is Hydroxyethylthiazole kinase 1 from Streptococcus pneumoniae serotype 4 (strain ATCC BAA-334 / TIGR4).